Here is a 245-residue protein sequence, read N- to C-terminus: 8-amino-3,8-dideoxy-manno-octulosonate cytidylyltransferase (245 aa).

The protein belongs to the KdsB family.

Its subcellular location is the cytoplasm. It carries out the reaction 8-amino-3,8-dideoxy-alpha-D-manno-octulosonate + CTP = CMP-8-amino-3,8-dideoxy-alpha-D-manno-oct-2-ulosonate + diphosphate. The protein operates within bacterial outer membrane biogenesis; lipopolysaccharide biosynthesis. Functionally, activates KDO8N (a required 8-carbon sugar) for incorporation into bacterial lipopolysaccharide in the Shewanella genus. The polypeptide is 8-amino-3,8-dideoxy-manno-octulosonate cytidylyltransferase (Shewanella baltica (strain OS223)).